The chain runs to 212 residues: Large ribosomal subunit protein uL3 (212 aa).

Polar residues predominate over residues 139–153; sequence LSHRVTGSIGQNQTP. Residues 139–161 are disordered; sequence LSHRVTGSIGQNQTPGKVFKGKK. Q151 is modified (N5-methylglutamine).

The protein belongs to the universal ribosomal protein uL3 family. Part of the 50S ribosomal subunit. Forms a cluster with proteins L14 and L19. Methylated by PrmB.

Functionally, one of the primary rRNA binding proteins, it binds directly near the 3'-end of the 23S rRNA, where it nucleates assembly of the 50S subunit. The protein is Large ribosomal subunit protein uL3 of Baumannia cicadellinicola subsp. Homalodisca coagulata.